A 1295-amino-acid chain; its full sequence is Phosphoribosylformylglycinamidine synthase (1295 aa).

Residues 305–327 (WPGAATGSGGEIRDEGATGRGAK) form a disordered region. ATP-binding positions include 307 to 318 (GAATGSGGEIRD) and A678. Positions 718, 722, and 884 each coordinate Mg(2+). S886 is a binding site for ATP. Positions 1042–1295 (VAVLREQGVN…IFRNARKQLG (254 aa)) constitute a Glutamine amidotransferase type-1 domain. C1135 serves as the catalytic Nucleophile. Residues H1260 and E1262 contribute to the active site.

In the N-terminal section; belongs to the FGAMS family. Monomer.

Its subcellular location is the cytoplasm. The catalysed reaction is N(2)-formyl-N(1)-(5-phospho-beta-D-ribosyl)glycinamide + L-glutamine + ATP + H2O = 2-formamido-N(1)-(5-O-phospho-beta-D-ribosyl)acetamidine + L-glutamate + ADP + phosphate + H(+). Its pathway is purine metabolism; IMP biosynthesis via de novo pathway; 5-amino-1-(5-phospho-D-ribosyl)imidazole from N(2)-formyl-N(1)-(5-phospho-D-ribosyl)glycinamide: step 1/2. In terms of biological role, phosphoribosylformylglycinamidine synthase involved in the purines biosynthetic pathway. Catalyzes the ATP-dependent conversion of formylglycinamide ribonucleotide (FGAR) and glutamine to yield formylglycinamidine ribonucleotide (FGAM) and glutamate. This chain is Phosphoribosylformylglycinamidine synthase, found in Escherichia coli O6:K15:H31 (strain 536 / UPEC).